A 265-amino-acid chain; its full sequence is Translation initiation factor 2 subunit alpha (265 aa).

The S1 motif domain maps to 12–82; sequence GELVIGTVKK…KMRVVEVSLK (71 aa).

This sequence belongs to the eIF-2-alpha family. In terms of assembly, heterotrimer composed of an alpha, a beta and a gamma chain.

EIF-2 functions in the early steps of protein synthesis by forming a ternary complex with GTP and initiator tRNA. In Pyrobaculum aerophilum (strain ATCC 51768 / DSM 7523 / JCM 9630 / CIP 104966 / NBRC 100827 / IM2), this protein is Translation initiation factor 2 subunit alpha.